A 322-amino-acid polypeptide reads, in one-letter code: D-alanine--D-alanine ligase (322 aa).

One can recognise an ATP-grasp domain in the interval 110 to 310 (KAVLAAAGIP…FDRLVFWIVE (201 aa)). 137-191 (MPPPYVVKPNAEGSSVGVSLVFEGANGPPRQLAAPDWAFGEQVMVEPYIPGLELA) lines the ATP pocket. 3 residues coordinate Mg(2+): D263, E277, and N279.

The protein belongs to the D-alanine--D-alanine ligase family. Mg(2+) is required as a cofactor. It depends on Mn(2+) as a cofactor.

It localises to the cytoplasm. The catalysed reaction is 2 D-alanine + ATP = D-alanyl-D-alanine + ADP + phosphate + H(+). Its pathway is cell wall biogenesis; peptidoglycan biosynthesis. Functionally, cell wall formation. The polypeptide is D-alanine--D-alanine ligase (Caulobacter sp. (strain K31)).